We begin with the raw amino-acid sequence, 154 residues long: Large ribosomal subunit protein uL15 (154 aa).

Over residues 1-13 (MKLHELKPAEGSR) the composition is skewed to basic and acidic residues. The tract at residues 1 to 52 (MKLHELKPAEGSRKNRKRVGRGPGGTDKTAGRGHKGQKSRSGAGKGSFFEGG) is disordered.

Belongs to the universal ribosomal protein uL15 family. Part of the 50S ribosomal subunit.

Functionally, binds to the 23S rRNA. This chain is Large ribosomal subunit protein uL15, found in Deinococcus deserti (strain DSM 17065 / CIP 109153 / LMG 22923 / VCD115).